Here is a 165-residue protein sequence, read N- to C-terminus: Sorting nexin-12 (165 aa).

Residues 1 to 20 form a disordered region; the sequence is MSDTAVADTRRLNSKPQDLT. S2 is subject to N-acetylserine. Position 23 is a phosphotyrosine (Y23). Residues 28-151 form the PX domain; it reads NFLEIDIFNP…HMFLQEEAID (124 aa). Residues R71, S73, K96, and R118 each coordinate a 1,2-diacyl-sn-glycero-3-phospho-(1D-myo-inositol-3-phosphate). Residue S73 is modified to Phosphoserine.

The protein belongs to the sorting nexin family.

The protein resides in the membrane. Functionally, may be involved in several stages of intracellular trafficking. This is Sorting nexin-12 (Snx12) from Mus musculus (Mouse).